The following is a 301-amino-acid chain: Aspartate carbamoyltransferase catalytic subunit (301 aa).

Carbamoyl phosphate is bound by residues Arg-46 and Thr-47. Lys-74 is a binding site for L-aspartate. 3 residues coordinate carbamoyl phosphate: Arg-96, His-124, and Gln-127. 2 residues coordinate L-aspartate: Arg-157 and Arg-208. Ala-249 and Pro-250 together coordinate carbamoyl phosphate.

This sequence belongs to the aspartate/ornithine carbamoyltransferase superfamily. ATCase family. As to quaternary structure, heterododecamer (2C3:3R2) of six catalytic PyrB chains organized as two trimers (C3), and six regulatory PyrI chains organized as three dimers (R2).

It catalyses the reaction carbamoyl phosphate + L-aspartate = N-carbamoyl-L-aspartate + phosphate + H(+). It participates in pyrimidine metabolism; UMP biosynthesis via de novo pathway; (S)-dihydroorotate from bicarbonate: step 2/3. Its function is as follows. Catalyzes the condensation of carbamoyl phosphate and aspartate to form carbamoyl aspartate and inorganic phosphate, the committed step in the de novo pyrimidine nucleotide biosynthesis pathway. This is Aspartate carbamoyltransferase catalytic subunit from Bacillus cereus (strain ATCC 14579 / DSM 31 / CCUG 7414 / JCM 2152 / NBRC 15305 / NCIMB 9373 / NCTC 2599 / NRRL B-3711).